We begin with the raw amino-acid sequence, 252 residues long: Imidazole glycerol phosphate synthase subunit HisF (252 aa).

Catalysis depends on residues aspartate 11 and aspartate 130.

It belongs to the HisA/HisF family. In terms of assembly, heterodimer of HisH and HisF.

It localises to the cytoplasm. The enzyme catalyses 5-[(5-phospho-1-deoxy-D-ribulos-1-ylimino)methylamino]-1-(5-phospho-beta-D-ribosyl)imidazole-4-carboxamide + L-glutamine = D-erythro-1-(imidazol-4-yl)glycerol 3-phosphate + 5-amino-1-(5-phospho-beta-D-ribosyl)imidazole-4-carboxamide + L-glutamate + H(+). The protein operates within amino-acid biosynthesis; L-histidine biosynthesis; L-histidine from 5-phospho-alpha-D-ribose 1-diphosphate: step 5/9. Its function is as follows. IGPS catalyzes the conversion of PRFAR and glutamine to IGP, AICAR and glutamate. The HisF subunit catalyzes the cyclization activity that produces IGP and AICAR from PRFAR using the ammonia provided by the HisH subunit. The chain is Imidazole glycerol phosphate synthase subunit HisF from Acinetobacter baylyi (strain ATCC 33305 / BD413 / ADP1).